Consider the following 401-residue polypeptide: Elongation factor Tu 1 (401 aa).

The tr-type G domain occupies 10–209 (KPHVNVGTIG…AVDEYIPTPV (200 aa)). The interval 19–26 (GHVDHGKT) is G1. 19–26 (GHVDHGKT) provides a ligand contact to GTP. Position 26 (threonine 26) interacts with Mg(2+). The segment at 60–64 (GITIA) is G2. A G3 region spans residues 81 to 84 (DCPG). GTP-binding positions include 81 to 85 (DCPGH) and 136 to 139 (NKVD). The G4 stretch occupies residues 136-139 (NKVD). The interval 174-176 (SAL) is G5.

It belongs to the TRAFAC class translation factor GTPase superfamily. Classic translation factor GTPase family. EF-Tu/EF-1A subfamily. Monomer.

Its subcellular location is the cytoplasm. It carries out the reaction GTP + H2O = GDP + phosphate + H(+). Functionally, GTP hydrolase that promotes the GTP-dependent binding of aminoacyl-tRNA to the A-site of ribosomes during protein biosynthesis. The chain is Elongation factor Tu 1 from Roseiflexus sp. (strain RS-1).